The chain runs to 287 residues: ATP synthase gamma chain (287 aa).

Belongs to the ATPase gamma chain family. F-type ATPases have 2 components, CF(1) - the catalytic core - and CF(0) - the membrane proton channel. CF(1) has five subunits: alpha(3), beta(3), gamma(1), delta(1), epsilon(1). CF(0) has three main subunits: a, b and c.

It is found in the cell inner membrane. Produces ATP from ADP in the presence of a proton gradient across the membrane. The gamma chain is believed to be important in regulating ATPase activity and the flow of protons through the CF(0) complex. The sequence is that of ATP synthase gamma chain from Salmonella agona (strain SL483).